Reading from the N-terminus, the 143-residue chain is Large ribosomal subunit protein uL11 (143 aa).

This sequence belongs to the universal ribosomal protein uL11 family. In terms of assembly, part of the ribosomal stalk of the 50S ribosomal subunit. Interacts with L10 and the large rRNA to form the base of the stalk. L10 forms an elongated spine to which L12 dimers bind in a sequential fashion forming a multimeric L10(L12)X complex. In terms of processing, one or more lysine residues are methylated.

Forms part of the ribosomal stalk which helps the ribosome interact with GTP-bound translation factors. This chain is Large ribosomal subunit protein uL11, found in Salinispora tropica (strain ATCC BAA-916 / DSM 44818 / JCM 13857 / NBRC 105044 / CNB-440).